The primary structure comprises 121 residues: Small ribosomal subunit protein uS13 (121 aa).

The disordered stretch occupies residues 97 to 121; that stretch reads VRGQRTRTNARTRRGARKTVAGKKK. Basic residues predominate over residues 100-121; it reads QRTRTNARTRRGARKTVAGKKK.

Belongs to the universal ribosomal protein uS13 family. As to quaternary structure, part of the 30S ribosomal subunit. Forms a loose heterodimer with protein S19. Forms two bridges to the 50S subunit in the 70S ribosome.

Its function is as follows. Located at the top of the head of the 30S subunit, it contacts several helices of the 16S rRNA. In the 70S ribosome it contacts the 23S rRNA (bridge B1a) and protein L5 of the 50S subunit (bridge B1b), connecting the 2 subunits; these bridges are implicated in subunit movement. Contacts the tRNAs in the A and P-sites. The protein is Small ribosomal subunit protein uS13 of Synechococcus sp. (strain CC9605).